A 212-amino-acid polypeptide reads, in one-letter code: Pyridoxine/pyridoxamine 5'-phosphate oxidase (212 aa).

Residues 8-11 (RRSY) and lysine 66 each bind substrate. Residues 61-66 (RIVLLK), 76-77 (FT), arginine 82, lysine 83, and glutamine 105 each bind FMN. Tyrosine 123, arginine 127, and serine 131 together coordinate substrate. Residues 140–141 (QS) and tryptophan 184 each bind FMN. 190-192 (RLH) provides a ligand contact to substrate. Position 194 (arginine 194) interacts with FMN.

It belongs to the pyridoxamine 5'-phosphate oxidase family. Homodimer. It depends on FMN as a cofactor.

It carries out the reaction pyridoxamine 5'-phosphate + O2 + H2O = pyridoxal 5'-phosphate + H2O2 + NH4(+). The enzyme catalyses pyridoxine 5'-phosphate + O2 = pyridoxal 5'-phosphate + H2O2. Its pathway is cofactor metabolism; pyridoxal 5'-phosphate salvage; pyridoxal 5'-phosphate from pyridoxamine 5'-phosphate: step 1/1. It functions in the pathway cofactor metabolism; pyridoxal 5'-phosphate salvage; pyridoxal 5'-phosphate from pyridoxine 5'-phosphate: step 1/1. Catalyzes the oxidation of either pyridoxine 5'-phosphate (PNP) or pyridoxamine 5'-phosphate (PMP) into pyridoxal 5'-phosphate (PLP). The chain is Pyridoxine/pyridoxamine 5'-phosphate oxidase from Cupriavidus necator (strain ATCC 17699 / DSM 428 / KCTC 22496 / NCIMB 10442 / H16 / Stanier 337) (Ralstonia eutropha).